The following is a 191-amino-acid chain: UPF0228 protein MM_1428 (191 aa).

Belongs to the UPF0228 family.

This chain is UPF0228 protein MM_1428, found in Methanosarcina mazei (strain ATCC BAA-159 / DSM 3647 / Goe1 / Go1 / JCM 11833 / OCM 88) (Methanosarcina frisia).